A 302-amino-acid polypeptide reads, in one-letter code: HTH-type transcriptional regulator AlsR (302 aa).

Residues 1–58 (MELRHLQYFIAVAEELHFGKAARRLNMTQPPLSQQIKQLEEEVGVTLLKRTKRFVELT) form the HTH lysR-type domain. Residues 18 to 37 (FGKAARRLNMTQPPLSQQIK) constitute a DNA-binding region (H-T-H motif).

Belongs to the LysR transcriptional regulatory family.

In terms of biological role, regulates the expression of the alsSD operon for acetoin biosynthesis. The polypeptide is HTH-type transcriptional regulator AlsR (alsR) (Bacillus subtilis (strain 168)).